An 881-amino-acid chain; its full sequence is Nitrate reductase [NADH] 1 (881 aa).

The tract at residues 1–46 is disordered; that stretch reads MAASVEHRPFTSHQHGVVRSFKSYPDVPRPKKLPLPQPLSDSTNDN. Cys-167 contacts Mo-molybdopterin. Residues 515–590 enclose the Cytochrome b5 heme-binding domain; it reads TKSYSLSEVR…LEDYRIGELM (76 aa). Heme is bound by residues His-550 and His-573. An FAD-binding FR-type domain is found at 625-737; it reads REKIPCKLLS…KGPLGHIEYT (113 aa). Residues 677–680, 694–698, Phe-699, Phe-706, 711–713, and Thr-764 each bind FAD; these read RAYT, VVKVY, and IMS.

This sequence belongs to the nitrate reductase family. Homodimer. It depends on FAD as a cofactor. Heme is required as a cofactor. The cofactor is Mo-molybdopterin.

The catalysed reaction is nitrite + NAD(+) + H2O = nitrate + NADH + H(+). Its function is as follows. Nitrate reductase is a key enzyme involved in the first step of nitrate assimilation in plants, fungi and bacteria. This is Nitrate reductase [NADH] 1 (NIA1) from Phaseolus vulgaris (Kidney bean).